Consider the following 461-residue polypeptide: Argininosuccinate lyase (461 aa).

It belongs to the lyase 1 family. Argininosuccinate lyase subfamily.

The protein localises to the cytoplasm. It catalyses the reaction 2-(N(omega)-L-arginino)succinate = fumarate + L-arginine. It functions in the pathway amino-acid biosynthesis; L-arginine biosynthesis; L-arginine from L-ornithine and carbamoyl phosphate: step 3/3. The polypeptide is Argininosuccinate lyase (Limosilactobacillus reuteri subsp. reuteri (strain JCM 1112) (Lactobacillus reuteri)).